Here is a 109-residue protein sequence, read N- to C-terminus: Hainantoxin-XVIII (109 aa).

An N-terminal signal peptide occupies residues M1–A18. The propeptide occupies F19–A46. Cystine bridges form between C47-C62, C55-C68, C59-C108, and C61-C81.

It belongs to the neurotoxin 25 family. F7 subfamily. As to expression, expressed by the venom gland.

The protein resides in the secreted. Its function is as follows. Putative ion channel inhibitor. This chain is Hainantoxin-XVIII, found in Cyriopagopus hainanus (Chinese bird spider).